Here is a 1012-residue protein sequence, read N- to C-terminus: PHD finger protein 20 (1012 aa).

Tudor domains are found at residues 4–69 (HPPN…RPLE) and 83–147 (GSSE…GNAR). Residues 142–336 (IVGNARPKET…RSSRLSTNGT (195 aa)) form a disordered region. Over residues 147-245 (RPKETDHKSL…QVDKKPENDI (99 aa)) the composition is skewed to basic and acidic residues. Ser159 is subject to Phosphoserine. A DNA-binding region (a.T hook) is located at residues 257-269 (KRKRGRPPSIAPT). A compositionally biased stretch (polar residues) spans 271–280 (VDSNSQTLQP). Residues 297–325 (PLKRPRLDKNSSQEKSKNYSENTDKDLSR) show a composition bias toward basic and acidic residues. The segment at 452-477 (FRCKVVDCLKFFRKAKLLHYHMKYFH) adopts a C2H2-type zinc-finger fold. Over residues 481–490 (KSLEPEESPG) the composition is skewed to basic and acidic residues. The segment at 481-611 (KSLEPEESPG…KGKVKALEED (131 aa)) is disordered. A Phosphoserine modification is found at Ser488. Positions 497–509 (RGPSASDKPSQET) are enriched in polar residues. Residues 522–538 (TKDKEKNKEKKFKEFVR) are compositionally biased toward basic and acidic residues. A compositionally biased stretch (basic residues) spans 539–551 (VKPKKKKKKKKKT). A PHD-type zinc finger spans residues 654–700 (RCICEVQEENDFMIQCEECQCWQHGVCMGLLEENVPEKYTCYVCQDP). Lys843 carries the N6-acetyllysine modification. Residues 866–912 (DAVNPLHENGDDSLSPRLGWPLDQDRSKGDSDPKPGSPKVKEYVSKK) are disordered. Ser878 and Ser880 each carry phosphoserine. Over residues 888–912 (DQDRSKGDSDPKPGSPKVKEYVSKK) the composition is skewed to basic and acidic residues.

In terms of assembly, homodimer; disulfide-linked. Component of some MLL1/MLL complex, at least composed of the core components KMT2A/MLL1, ASH2L, HCFC1, WDR5 and RBBP5, as well as the facultative components BACC1, CHD8, E2F6, HSP70, INO80C, KANSL1, LAS1L, MAX, MCRS1, MGA, KAT8/MOF, PELP1, PHF20, PRP31, RING2, RUVB1/TIP49A, RUVB2/TIP49B, SENP3, TAF1, TAF4, TAF6, TAF7, TAF9 and TEX10. Component of the NSL complex at least composed of MOF/KAT8, KANSL1, KANSL2, KANSL3, MCRS1, PHF20, OGT1/OGT, WDR5 and HCFC1. Ubiquitinated by TRIM26; leading to proteasomal degradation. In terms of tissue distribution, expressed in heart, kidney, liver, lung, pancreas, placenta, spleen and testis. Not expressed in brain, skeletal muscle, colon, ovary, prostate, small intestine and thymus. Expressed in colon and ovary cancer cell lines while it is not expressed in the respective normal tissues.

The protein resides in the nucleus. Its function is as follows. Methyllysine-binding protein, component of the MOF histone acetyltransferase protein complex. Not required for maintaining the global histone H4 'Lys-16' acetylation (H4K16ac) levels or locus specific histone acetylation, but instead works downstream in transcriptional regulation of MOF target genes. As part of the NSL complex it may be involved in acetylation of nucleosomal histone H4 on several lysine residues. Contributes to methyllysine-dependent p53/TP53 stabilization and up-regulation after DNA damage. The polypeptide is PHD finger protein 20 (PHF20) (Homo sapiens (Human)).